A 761-amino-acid polypeptide reads, in one-letter code: Xaa-Pro dipeptidyl-peptidase (761 aa).

Active-site charge relay system residues include Ser-349, Asp-469, and His-499.

The protein belongs to the peptidase S15 family. Homodimer.

The protein localises to the cytoplasm. The catalysed reaction is Hydrolyzes Xaa-Pro-|- bonds to release unblocked, N-terminal dipeptides from substrates including Ala-Pro-|-p-nitroanilide and (sequentially) Tyr-Pro-|-Phe-Pro-|-Gly-Pro-|-Ile.. In terms of biological role, removes N-terminal dipeptides sequentially from polypeptides having unsubstituted N-termini provided that the penultimate residue is proline. The polypeptide is Xaa-Pro dipeptidyl-peptidase (Streptococcus equi subsp. equi (strain 4047)).